We begin with the raw amino-acid sequence, 520 residues long: Ribonuclease Y (520 aa).

A helical membrane pass occupies residues 4-24 (TMFTIISILLSLICLVVGYFV). Positions 210–273 (TVSVVNLPND…ETARIALDKL (64 aa)) constitute a KH domain. The HD domain maps to 336-429 (VLKHSIEVAH…VAAADALSAA (94 aa)).

This sequence belongs to the RNase Y family.

Its subcellular location is the cell membrane. Functionally, endoribonuclease that initiates mRNA decay. In Bacillus pumilus (strain SAFR-032), this protein is Ribonuclease Y.